A 131-amino-acid polypeptide reads, in one-letter code: Glycine cleavage system H protein (131 aa).

One can recognise a Lipoyl-binding domain in the interval 24–106 (RVTVGISDHA…YGEGWMFVVE (83 aa)). K65 carries the N6-lipoyllysine modification.

The protein belongs to the GcvH family. The glycine cleavage system is composed of four proteins: P, T, L and H. (R)-lipoate serves as cofactor.

Its function is as follows. The glycine cleavage system catalyzes the degradation of glycine. The H protein shuttles the methylamine group of glycine from the P protein to the T protein. The chain is Glycine cleavage system H protein from Stenotrophomonas maltophilia (strain K279a).